A 101-amino-acid polypeptide reads, in one-letter code: NAD(P)H-quinone oxidoreductase subunit 4L, chloroplastic (101 aa).

3 helical membrane-spanning segments follow: residues 2 to 22 (ILEHVLVLSAYLFSIGIYGLI), 32 to 52 (MCLELILNSVNLNFVTFSDFF), and 61 to 81 (IFSIFIIAIAAAEAAIGLAIV).

The protein belongs to the complex I subunit 4L family. In terms of assembly, NDH is composed of at least 16 different subunits, 5 of which are encoded in the nucleus.

The protein localises to the plastid. Its subcellular location is the chloroplast thylakoid membrane. It carries out the reaction a plastoquinone + NADH + (n+1) H(+)(in) = a plastoquinol + NAD(+) + n H(+)(out). It catalyses the reaction a plastoquinone + NADPH + (n+1) H(+)(in) = a plastoquinol + NADP(+) + n H(+)(out). Its function is as follows. NDH shuttles electrons from NAD(P)H:plastoquinone, via FMN and iron-sulfur (Fe-S) centers, to quinones in the photosynthetic chain and possibly in a chloroplast respiratory chain. The immediate electron acceptor for the enzyme in this species is believed to be plastoquinone. Couples the redox reaction to proton translocation, and thus conserves the redox energy in a proton gradient. The polypeptide is NAD(P)H-quinone oxidoreductase subunit 4L, chloroplastic (Oenothera argillicola (Appalachian evening primrose)).